The following is a 664-amino-acid chain: Protein fem-1 homolog CG6966 (664 aa).

6 ANK repeats span residues 40-70, 82-111, 115-144, 148-177, 181-210, and 213-242; these read NGAT…NVEQ, EDAP…NVNS, TNST…DFEV, HGHT…DVNR, KGNT…TMDV, and YGMT…VSRE. TPR repeat units lie at residues 245–279 and 335–368; these read IHAL…RAVE and SYYI…QQKI. The tract at residues 433-460 is disordered; it reads QQKDQQHPQKQLPAADKSPSCSASSSAS. A compositionally biased stretch (low complexity) spans 450 to 460; it reads SPSCSASSSAS. ANK repeat units follow at residues 529–571 and 575–605; these read FDRT…DPNA and AGNT…HLDT.

The protein belongs to the fem-1 family. In terms of assembly, component of a CRL2 E3 ubiquitin-protein ligase complex, also named ECS (Elongin BC-CUL2/5-SOCS-box protein) complex.

It participates in protein modification; protein ubiquitination. In terms of biological role, substrate-recognition component of a Cul2-RING (CRL2) E3 ubiquitin-protein ligase complex of the DesCEND (destruction via C-end degrons) pathway, which recognizes a C-degron located at the extreme C terminus of target proteins, leading to their ubiquitination and degradation. The C-degron recognized by the DesCEND pathway is usually a motif of less than ten residues and can be present in full-length proteins, truncated proteins or proteolytically cleaved forms. The polypeptide is Protein fem-1 homolog CG6966 (Drosophila melanogaster (Fruit fly)).